An 860-amino-acid chain; its full sequence is Alanine--tRNA ligase (860 aa).

Zn(2+) contacts are provided by His563, His567, Cys665, and His669.

This sequence belongs to the class-II aminoacyl-tRNA synthetase family. It depends on Zn(2+) as a cofactor.

It is found in the cytoplasm. It carries out the reaction tRNA(Ala) + L-alanine + ATP = L-alanyl-tRNA(Ala) + AMP + diphosphate. Catalyzes the attachment of alanine to tRNA(Ala) in a two-step reaction: alanine is first activated by ATP to form Ala-AMP and then transferred to the acceptor end of tRNA(Ala). Also edits incorrectly charged Ser-tRNA(Ala) and Gly-tRNA(Ala) via its editing domain. The sequence is that of Alanine--tRNA ligase from Vibrio parahaemolyticus serotype O3:K6 (strain RIMD 2210633).